Reading from the N-terminus, the 98-residue chain is Aspartyl/glutamyl-tRNA(Asn/Gln) amidotransferase subunit C (98 aa).

The protein belongs to the GatC family. As to quaternary structure, heterotrimer of A, B and C subunits.

The catalysed reaction is L-glutamyl-tRNA(Gln) + L-glutamine + ATP + H2O = L-glutaminyl-tRNA(Gln) + L-glutamate + ADP + phosphate + H(+). The enzyme catalyses L-aspartyl-tRNA(Asn) + L-glutamine + ATP + H2O = L-asparaginyl-tRNA(Asn) + L-glutamate + ADP + phosphate + 2 H(+). In terms of biological role, allows the formation of correctly charged Asn-tRNA(Asn) or Gln-tRNA(Gln) through the transamidation of misacylated Asp-tRNA(Asn) or Glu-tRNA(Gln) in organisms which lack either or both of asparaginyl-tRNA or glutaminyl-tRNA synthetases. The reaction takes place in the presence of glutamine and ATP through an activated phospho-Asp-tRNA(Asn) or phospho-Glu-tRNA(Gln). The protein is Aspartyl/glutamyl-tRNA(Asn/Gln) amidotransferase subunit C of Beutenbergia cavernae (strain ATCC BAA-8 / DSM 12333 / CCUG 43141 / JCM 11478 / NBRC 16432 / NCIMB 13614 / HKI 0122).